Consider the following 111-residue polypeptide: Translation initiation factor 1A (111 aa).

Residues 1–13 (MKKSNNKNNHKNN) show a composition bias toward basic residues. The disordered stretch occupies residues 1–30 (MKKSNNKNNHKNNHNNNQGGENIRVRSPRR). Residues 23–96 (IRVRSPRRGE…EKADVIWRYT (74 aa)) enclose the S1-like domain.

It belongs to the eIF-1A family.

Its function is as follows. Seems to be required for maximal rate of protein biosynthesis. Enhances ribosome dissociation into subunits and stabilizes the binding of the initiator Met-tRNA(I) to 40 S ribosomal subunits. This is Translation initiation factor 1A from Methanosphaera stadtmanae (strain ATCC 43021 / DSM 3091 / JCM 11832 / MCB-3).